We begin with the raw amino-acid sequence, 315 residues long: Acetaldehyde dehydrogenase (315 aa).

13-16 serves as a coordination point for NAD(+); that stretch reads SGNI. Cys131 functions as the Acyl-thioester intermediate in the catalytic mechanism. Residues 163-171 and Asn290 contribute to the NAD(+) site; that span reads SAGPGTRAN.

It belongs to the acetaldehyde dehydrogenase family.

It carries out the reaction acetaldehyde + NAD(+) + CoA = acetyl-CoA + NADH + H(+). The chain is Acetaldehyde dehydrogenase from Xanthobacter autotrophicus (strain ATCC BAA-1158 / Py2).